We begin with the raw amino-acid sequence, 210 residues long: MNPLRVKLDALISKTSLTVTEQQREQLVGYVQLLDKWNKAYNLTSVRDPMEMLVKHILDSLVVSPHLVGERFIDVGSGPGLPGIPLAIMHPDKEFVLIDSLGKRIRFLKQVIHDLKINNVLPVQSRVEEFDPESGFDGVLSRAFASMTDMVNWCQHLPKPNAGVFLALKGVRPDDEITLLPEWCSVTDIKALQVPELEGERHLVILSRKG.

Residues G76, L81, 127-128, and R142 each bind S-adenosyl-L-methionine; that span reads VE.

It belongs to the methyltransferase superfamily. RNA methyltransferase RsmG family.

Its subcellular location is the cytoplasm. It carries out the reaction guanosine(527) in 16S rRNA + S-adenosyl-L-methionine = N(7)-methylguanosine(527) in 16S rRNA + S-adenosyl-L-homocysteine. Functionally, specifically methylates the N7 position of guanine in position 527 of 16S rRNA. This Vibrio cholerae serotype O1 (strain ATCC 39315 / El Tor Inaba N16961) protein is Ribosomal RNA small subunit methyltransferase G.